An 815-amino-acid polypeptide reads, in one-letter code: Lon protease 2 (815 aa).

Residues 19 to 212 (LPVLPLINTV…RLSVVLSQEI (194 aa)) form the Lon N-terminal domain. Residue 365-372 (GPPGVGKT) coordinates ATP. The Lon proteolytic domain maps to 601 to 782 (RDEIGVATGM…DEVLPIAFVS (182 aa)). Residues serine 688 and lysine 731 contribute to the active site.

It belongs to the peptidase S16 family. In terms of assembly, homohexamer. Organized in a ring with a central cavity.

It localises to the cytoplasm. The catalysed reaction is Hydrolysis of proteins in presence of ATP.. In terms of biological role, ATP-dependent serine protease that mediates the selective degradation of mutant and abnormal proteins as well as certain short-lived regulatory proteins. Required for cellular homeostasis and for survival from DNA damage and developmental changes induced by stress. Degrades polypeptides processively to yield small peptide fragments that are 5 to 10 amino acids long. Binds to DNA in a double-stranded, site-specific manner. This is Lon protease 2 from Herpetosiphon aurantiacus (strain ATCC 23779 / DSM 785 / 114-95).